Consider the following 455-residue polypeptide: Catalase-like protein (455 aa).

The interval 1-25 (MSQQDKKLTGVFGHPVSDRENSMTA) is disordered.

The protein belongs to the catalase family.

Functionally, catalytically inactive. In Staphylococcus aureus, this protein is Catalase-like protein (katB).